Here is a 288-residue protein sequence, read N- to C-terminus: Quinate/shikimate dehydrogenase (288 aa).

The substrate site is built by Lys71 and Asp107. NAD(+)-binding positions include 132 to 135 (AGGA), 155 to 158 (NRRD), Lys205, 232 to 235 (CVYN), and Gly255.

This sequence belongs to the shikimate dehydrogenase family. In terms of assembly, homodimer.

The enzyme catalyses L-quinate + NAD(+) = 3-dehydroquinate + NADH + H(+). It catalyses the reaction L-quinate + NADP(+) = 3-dehydroquinate + NADPH + H(+). The catalysed reaction is shikimate + NADP(+) = 3-dehydroshikimate + NADPH + H(+). It carries out the reaction shikimate + NAD(+) = 3-dehydroshikimate + NADH + H(+). Its pathway is metabolic intermediate biosynthesis; chorismate biosynthesis; chorismate from D-erythrose 4-phosphate and phosphoenolpyruvate: step 4/7. Functionally, the actual biological function of YdiB remains unclear, nor is it known whether 3-dehydroshikimate or quinate represents the natural substrate. Catalyzes the reversible NAD-dependent reduction of both 3-dehydroshikimate (DHSA) and 3-dehydroquinate to yield shikimate (SA) and quinate, respectively. It can use both NAD or NADP for catalysis, however it has higher catalytic efficiency with NAD. The chain is Quinate/shikimate dehydrogenase from Escherichia coli O1:K1 / APEC.